Reading from the N-terminus, the 397-residue chain is uncharacterized protein (397 aa).

4 helical membrane-spanning segments follow: residues 62–79, 92–109, 135–154, and 167–189; these read VLLF…LIAI, WYGL…LVVT, VVFL…STLS, and AFLK…FPGI.

The protein resides in the cell membrane. This is an uncharacterized protein from Archaeoglobus fulgidus (strain ATCC 49558 / DSM 4304 / JCM 9628 / NBRC 100126 / VC-16).